We begin with the raw amino-acid sequence, 76 residues long: Putative UPF0377 protein YGL260W (76 aa).

The protein belongs to the UPF0377 family.

The sequence is that of Putative UPF0377 protein YGL260W from Saccharomyces cerevisiae (strain ATCC 204508 / S288c) (Baker's yeast).